The chain runs to 360 residues: uncharacterized protein (360 aa).

The ABC transporter domain maps to L4–I235. G37–S44 provides a ligand contact to ATP.

Belongs to the ABC transporter superfamily.

This is an uncharacterized protein from Escherichia coli O6:H1 (strain CFT073 / ATCC 700928 / UPEC).